We begin with the raw amino-acid sequence, 296 residues long: GTPase Era (296 aa).

The region spanning 7-174 (RAGFVAIVGR…LDEIAAGLPQ (168 aa)) is the Era-type G domain. A G1 region spans residues 15-22 (GRPNVGKS). 15–22 (GRPNVGKS) contacts GTP. Positions 41-45 (QTTRH) are G2. The tract at residues 62 to 65 (DTPG) is G3. Residues 62 to 66 (DTPGF) and 123 to 126 (SKID) each bind GTP. Positions 123 to 126 (SKID) are G4. The segment at 153 to 155 (VSA) is G5. The KH type-2 domain occupies 205–281 (VGDELPYGCT…HLEIYIKVRK (77 aa)).

Belongs to the TRAFAC class TrmE-Era-EngA-EngB-Septin-like GTPase superfamily. Era GTPase family. In terms of assembly, monomer.

The protein localises to the cytoplasm. The protein resides in the cell inner membrane. Its function is as follows. An essential GTPase that binds both GDP and GTP, with rapid nucleotide exchange. Plays a role in 16S rRNA processing and 30S ribosomal subunit biogenesis and possibly also in cell cycle regulation and energy metabolism. The chain is GTPase Era from Bordetella parapertussis (strain 12822 / ATCC BAA-587 / NCTC 13253).